The following is a 320-amino-acid chain: MKKIAILTSGGDAPGMNAAIRAVVRTAIDKGLEVMGVQRGYSGLLNGELFAMNRTSVSDIIQRGGTILRTARCPEFKDEEVRKRAVKILNAYGVDALVVIGGDGSFMGAKLLSKLGIKTIGLPGTIDNDLAYTDFTIGFDTALNTIVDAINKIRDTSTSHERVSIIEVMGRDCGDLALHAGISSGAEAIIVPEMGEFDRDALCRTILDGKNHGKTHSIVILAEGIGGAEELSKYVQELTGIEARATILGHIQRGGAPSASDRVLASRLGARAVEVLLQGETSRVIGIRDNQIVDQDIDEALAIESKFDLDLYNVAEVLSR.

Gly-11 lines the ATP pocket. 21-25 provides a ligand contact to ADP; sequence RAVVR. ATP-binding positions include 72–73 and 102–105; these read RC and GDGS. Asp-103 contributes to the Mg(2+) binding site. 125-127 contributes to the substrate binding site; it reads TID. The active-site Proton acceptor is the Asp-127. Position 154 (Arg-154) interacts with ADP. Residues Arg-162 and 169 to 171 each bind substrate; that span reads MGR. Residues 185–187 and 214–216 contribute to the ADP site; these read GAE and KTH. Substrate-binding positions include Glu-223, Arg-244, and 250–253; that span reads HIQR.

Belongs to the phosphofructokinase type A (PFKA) family. ATP-dependent PFK group I subfamily. Prokaryotic clade 'B1' sub-subfamily. Homotetramer. Requires Mg(2+) as cofactor.

The protein resides in the cytoplasm. The catalysed reaction is beta-D-fructose 6-phosphate + ATP = beta-D-fructose 1,6-bisphosphate + ADP + H(+). It functions in the pathway carbohydrate degradation; glycolysis; D-glyceraldehyde 3-phosphate and glycerone phosphate from D-glucose: step 3/4. With respect to regulation, allosterically activated by ADP and other diphosphonucleosides, and allosterically inhibited by phosphoenolpyruvate. Catalyzes the phosphorylation of D-fructose 6-phosphate to fructose 1,6-bisphosphate by ATP, the first committing step of glycolysis. The chain is ATP-dependent 6-phosphofructokinase from Clostridium botulinum (strain Eklund 17B / Type B).